The sequence spans 600 residues: Long-chain-fatty-acid--CoA ligase FadD15 (600 aa).

The protein belongs to the ATP-dependent AMP-binding enzyme family.

It carries out the reaction a long-chain fatty acid + ATP + CoA = a long-chain fatty acyl-CoA + AMP + diphosphate. The enzyme catalyses dodecanoate + ATP + CoA = dodecanoyl-CoA + AMP + diphosphate. It catalyses the reaction hexadecanoate + ATP + CoA = hexadecanoyl-CoA + AMP + diphosphate. Its pathway is lipid metabolism; fatty acid biosynthesis. Functionally, catalyzes the activation of long-chain fatty acids as acyl-coenzyme A (acyl-CoA), which are then transferred to the multifunctional polyketide synthase (PKS) type III for further chain extension. The polypeptide is Long-chain-fatty-acid--CoA ligase FadD15 (fadD15) (Mycobacterium tuberculosis (strain ATCC 25618 / H37Rv)).